The following is a 119-amino-acid chain: Large ribosomal subunit protein uL24 (119 aa).

It belongs to the universal ribosomal protein uL24 family. Part of the 50S ribosomal subunit.

Its function is as follows. One of two assembly initiator proteins, it binds directly to the 5'-end of the 23S rRNA, where it nucleates assembly of the 50S subunit. One of the proteins that surrounds the polypeptide exit tunnel on the outside of the subunit. This chain is Large ribosomal subunit protein uL24, found in Leptospira interrogans serogroup Icterohaemorrhagiae serovar copenhageni (strain Fiocruz L1-130).